The primary structure comprises 203 residues: Large ribosomal subunit protein bL25 (203 aa).

This sequence belongs to the bacterial ribosomal protein bL25 family. CTC subfamily. In terms of assembly, part of the 50S ribosomal subunit; part of the 5S rRNA/L5/L18/L25 subcomplex. Contacts the 5S rRNA. Binds to the 5S rRNA independently of L5 and L18.

This is one of the proteins that binds to the 5S RNA in the ribosome where it forms part of the central protuberance. The protein is Large ribosomal subunit protein bL25 of Rickettsia rickettsii (strain Iowa).